The sequence spans 216 residues: Ras-related protein RABE1c (216 aa).

A GTP-binding site is contributed by 22 to 29; the sequence is GDSGVGKS. The Effector region signature appears at 44 to 52; sequence FITTIGIDF. Residues 70–74, 128–131, and 159–160 contribute to the GTP site; these read DTAGQ, NKAD, and SA. 2 S-geranylgeranyl cysteine lipidation sites follow: Cys-213 and Cys-214.

It belongs to the small GTPase superfamily. Rab family. Interacts with PI5K2.

The protein resides in the golgi apparatus membrane. Its subcellular location is the cell membrane. Functionally, involved in membrane trafficking from the Golgi to the plasma membrane. In Arabidopsis thaliana (Mouse-ear cress), this protein is Ras-related protein RABE1c (RABE1C).